Reading from the N-terminus, the 2278-residue chain is 1-phosphatidylinositol 3-phosphate 5-kinase FAB1 (2278 aa).

Disordered regions lie at residues 1 to 30 (MSSE…SVNT) and 76 to 144 (PPTS…LQLP). The residue at position 2 (S2) is an N-acetylserine. Positions 2-676 (SSEEPHASIS…NSTKSFQRAQ (675 aa)) are required for localization to the vacuole membrane. 2 stretches are compositionally biased toward low complexity: residues 18–28 (VRSSSTGTSSV) and 76–89 (PPTS…TSTS). Over residues 90–128 (HVTGTASHSNIKANANTSTSVNKKNLPPTTSGRIPSSTI) the composition is skewed to polar residues. Position 186 is a phosphoserine (S186). The FYVE-type zinc finger occupies 240 to 299 (DESSKECFSCGKTFNTFRRKHHCRICGQIFCSSCTLLIDGDRFGCHAKMRVCYNCYEHAD). Residues C246, C249, C262, C265, C270, C273, C291, and C294 each contribute to the Zn(2+) site. 5 disordered regions span residues 302–337 (EDSS…HSHS), 472–500 (ITIN…NNPA), 514–534 (NSVN…AQSS), 556–697 (FNYN…PNNS), and 727–766 (DSSP…NINT). Low complexity predominate over residues 472–498 (ITINNLNNTTSNNSNYNNTNSNSNINN). Residues 557-570 (NYNSKGPSQQNDTA) show a composition bias toward polar residues. The segment covering 571–601 (NGNNDNNNNNNNNNNNNNNNSASGIADNNNI) has biased composition (low complexity). A compositionally biased stretch (polar residues) spans 602 to 611 (PSNDNGTTFT). Positions 634 to 644 (LNEEDSSEDEG) are enriched in acidic residues. Polar residues predominate over residues 665–679 (MRNSTKSFQRAQASL). Over residues 682–692 (MRFRRKSKSKH) the composition is skewed to basic residues. A compositionally biased stretch (polar residues) spans 729 to 741 (SPLQDKASSSAAS). Low complexity predominate over residues 749–763 (SNSSGSNNNSNSNSN). The segment at 766-1039 (TDPWKRIASI…KIKQVSEFMV (274 aa)) is CCT domain. The CCR domain stretch occupies residues 1181–1500 (SSSQNLLGTG…TAKQLKKLFY (320 aa)). The segment covering 1506–1554 (DSEDKKSLHDEKAKTRKPEKNELPLEGLKDVEKPKIDSKNTTENRDRTN) has biased composition (basic and acidic residues). Residues 1506–1627 (DSEDKKSLHD…TRPNIRKMSS (122 aa)) form a disordered region. Over residues 1555–1564 (EPQNAVTITT) the composition is skewed to polar residues. Residues 1580 to 1595 (LTVTPSASSVSSSLTP) show a composition bias toward low complexity. S1627 and S1630 each carry phosphoserine. Polar residues predominate over residues 1766–1776 (SGKTTASTHLN). 2 disordered regions span residues 1766–1804 (SGKT…EPLP) and 1891–1972 (QQQQ…THSQ). Residues 1780–1799 (VVKETSENPKSIVRESDNSK) show a composition bias toward basic and acidic residues. Over residues 1918–1932 (DPSVNISPSVSTTSH) the composition is skewed to polar residues. One can recognise a PIPK domain in the interval 1932 to 2266 (HNKGRDSEIS…RFREAMERYI (335 aa)). S1938 is subject to Phosphoserine. T1953 is modified (phosphothreonine).

Component of the PI(3,5)P2 regulatory complex, composed of ATG18, FIG4, FAB1, VAC14 and VAC7. VAC14 nucleates the assembly of the complex and serves as a scaffold. The cofactor is Mg(2+). Mn(2+) serves as cofactor.

It localises to the vacuole membrane. The protein resides in the endosome membrane. The catalysed reaction is a 1,2-diacyl-sn-glycero-3-phospho-(1D-myo-inositol-3-phosphate) + ATP = a 1,2-diacyl-sn-glycero-3-phospho-(1D-myo-inositol-3,5-bisphosphate) + ADP + H(+). The enzyme catalyses 1,2-dihexadecanoyl-sn-glycero-3-phospho-(1D-myo-inositol-3-phosphate) + ATP = 1,2-dihexadecanoyl-sn-glycero-3-phospho-(1D-myo-inositol-3,5-phosphate) + ADP + H(+). With respect to regulation, activated by VAC14 and VAC7. VAC14 acts as a specific osmotic response regulator. Its function is as follows. The PI(3,5)P2 regulatory complex regulates both the synthesis and turnover of phosphatidylinositol 3,5-bisphosphate (PtdIns(3,5)P2). Catalyzes the phosphorylation of phosphatidylinositol 3-phosphate on the fifth hydroxyl of the myo-inositol ring, to form phosphatidylinositol 3,5-bisphosphate. Required for endocytic-vacuolar pathway and nuclear migration. The product of the reaction, PI(3,5)P2 is an important regulator of vacuole homeostasis perhaps by controlling membrane flux to and/or from the vacuole. PI(3,5)P2 regulates the transition between trans-SNARE complex formation and vacuole membrane fusion. Hyperosmotic shock-induced increase in the levels of PtdIns(3,5)P2 requires the presence of VAC7, VAC14, and/or FIG4. This Saccharomyces cerevisiae (strain ATCC 204508 / S288c) (Baker's yeast) protein is 1-phosphatidylinositol 3-phosphate 5-kinase FAB1.